The following is a 364-amino-acid chain: Dual-specificity RNA methyltransferase RlmN (364 aa).

Glu-91 serves as the catalytic Proton acceptor. Residues 97–333 form the Radical SAM core domain; that stretch reads EDDRGTLCVS…VTVRKTRGDD (237 aa). Cysteines 104 and 338 form a disulfide. [4Fe-4S] cluster contacts are provided by Cys-111, Cys-115, and Cys-118. S-adenosyl-L-methionine contacts are provided by residues 164–165, Ser-196, 218–220, and Asn-295; these read GE and SLH. Catalysis depends on Cys-338, which acts as the S-methylcysteine intermediate.

The protein belongs to the radical SAM superfamily. RlmN family. It depends on [4Fe-4S] cluster as a cofactor.

The protein localises to the cytoplasm. It carries out the reaction adenosine(2503) in 23S rRNA + 2 reduced [2Fe-2S]-[ferredoxin] + 2 S-adenosyl-L-methionine = 2-methyladenosine(2503) in 23S rRNA + 5'-deoxyadenosine + L-methionine + 2 oxidized [2Fe-2S]-[ferredoxin] + S-adenosyl-L-homocysteine. It catalyses the reaction adenosine(37) in tRNA + 2 reduced [2Fe-2S]-[ferredoxin] + 2 S-adenosyl-L-methionine = 2-methyladenosine(37) in tRNA + 5'-deoxyadenosine + L-methionine + 2 oxidized [2Fe-2S]-[ferredoxin] + S-adenosyl-L-homocysteine. Specifically methylates position 2 of adenine 2503 in 23S rRNA and position 2 of adenine 37 in tRNAs. m2A2503 modification seems to play a crucial role in the proofreading step occurring at the peptidyl transferase center and thus would serve to optimize ribosomal fidelity. This Chromobacterium violaceum (strain ATCC 12472 / DSM 30191 / JCM 1249 / CCUG 213 / NBRC 12614 / NCIMB 9131 / NCTC 9757 / MK) protein is Dual-specificity RNA methyltransferase RlmN.